A 156-amino-acid chain; its full sequence is Small ribosomal subunit protein uS7 (156 aa).

It belongs to the universal ribosomal protein uS7 family. Part of the 30S ribosomal subunit. Contacts proteins S9 and S11.

In terms of biological role, one of the primary rRNA binding proteins, it binds directly to 16S rRNA where it nucleates assembly of the head domain of the 30S subunit. Is located at the subunit interface close to the decoding center, probably blocks exit of the E-site tRNA. The chain is Small ribosomal subunit protein uS7 from Staphylococcus aureus (strain bovine RF122 / ET3-1).